The following is a 297-amino-acid chain: N-acetylneuraminate lyase (297 aa).

Ser-47 and Thr-48 together coordinate aceneuramate. The active-site Proton donor is Tyr-137. The Schiff-base intermediate with substrate role is filled by Lys-165. 5 residues coordinate aceneuramate: Thr-167, Gly-189, Asp-191, Glu-192, and Ser-208.

It belongs to the DapA family. NanA subfamily. As to quaternary structure, homotetramer.

The protein resides in the cytoplasm. The catalysed reaction is aceneuramate = aldehydo-N-acetyl-D-mannosamine + pyruvate. The protein operates within amino-sugar metabolism; N-acetylneuraminate degradation; D-fructose 6-phosphate from N-acetylneuraminate: step 1/5. Catalyzes the reversible aldol cleavage of N-acetylneuraminic acid (sialic acid; Neu5Ac) to form pyruvate and N-acetylmannosamine (ManNAc) via a Schiff base intermediate. The polypeptide is N-acetylneuraminate lyase (Citrobacter koseri (strain ATCC BAA-895 / CDC 4225-83 / SGSC4696)).